We begin with the raw amino-acid sequence, 264 residues long: uncharacterized protein (264 aa).

Residues H5, H7, E93, H134, H158, and D208 each coordinate a divalent metal cation.

Belongs to the metallo-dependent hydrolases superfamily. TatD-type hydrolase family. The cofactor is a divalent metal cation.

This is an uncharacterized protein from Mycobacterium tuberculosis (strain ATCC 25618 / H37Rv).